The chain runs to 162 residues: ATP synthase subunit b (162 aa).

Residues 4 to 24 (INWGSIIYQLIAFCVLLWLLS) form a helical membrane-spanning segment.

The protein belongs to the ATPase B chain family. As to quaternary structure, F-type ATPases have 2 components, F(1) - the catalytic core - and F(0) - the membrane proton channel. F(1) has five subunits: alpha(3), beta(3), gamma(1), delta(1), epsilon(1). F(0) has three main subunits: a(1), b(2) and c(10-14). The alpha and beta chains form an alternating ring which encloses part of the gamma chain. F(1) is attached to F(0) by a central stalk formed by the gamma and epsilon chains, while a peripheral stalk is formed by the delta and b chains.

Its subcellular location is the cell membrane. Functionally, f(1)F(0) ATP synthase produces ATP from ADP in the presence of a proton or sodium gradient. F-type ATPases consist of two structural domains, F(1) containing the extramembraneous catalytic core and F(0) containing the membrane proton channel, linked together by a central stalk and a peripheral stalk. During catalysis, ATP synthesis in the catalytic domain of F(1) is coupled via a rotary mechanism of the central stalk subunits to proton translocation. Its function is as follows. Component of the F(0) channel, it forms part of the peripheral stalk, linking F(1) to F(0). In Halalkalibacterium halodurans (strain ATCC BAA-125 / DSM 18197 / FERM 7344 / JCM 9153 / C-125) (Bacillus halodurans), this protein is ATP synthase subunit b.